Consider the following 131-residue polypeptide: Phosphoribosyl-AMP cyclohydrolase (131 aa).

Aspartate 89 is a binding site for Mg(2+). Cysteine 90 serves as a coordination point for Zn(2+). The Mg(2+) site is built by aspartate 91 and aspartate 93. 2 residues coordinate Zn(2+): cysteine 106 and cysteine 113.

This sequence belongs to the PRA-CH family. In terms of assembly, homodimer. Mg(2+) is required as a cofactor. It depends on Zn(2+) as a cofactor.

The protein localises to the cytoplasm. It catalyses the reaction 1-(5-phospho-beta-D-ribosyl)-5'-AMP + H2O = 1-(5-phospho-beta-D-ribosyl)-5-[(5-phospho-beta-D-ribosylamino)methylideneamino]imidazole-4-carboxamide. The protein operates within amino-acid biosynthesis; L-histidine biosynthesis; L-histidine from 5-phospho-alpha-D-ribose 1-diphosphate: step 3/9. Functionally, catalyzes the hydrolysis of the adenine ring of phosphoribosyl-AMP. In Pyrobaculum aerophilum (strain ATCC 51768 / DSM 7523 / JCM 9630 / CIP 104966 / NBRC 100827 / IM2), this protein is Phosphoribosyl-AMP cyclohydrolase.